Here is a 450-residue protein sequence, read N- to C-terminus: Salicylate synthase (450 aa).

Glu252 (proton donor) is an active-site residue. 270–271 (GT) is a substrate binding site. Glu297 serves as a coordination point for Mg(2+). Substrate is bound by residues Tyr385, Arg405, and 419 to 421 (GAG). Positions 431 and 434 each coordinate Mg(2+). Lys438 serves as a coordination point for substrate.

It belongs to the anthranilate synthase component I family. Salicylate synthase subfamily. Monomer. Mg(2+) serves as cofactor.

The catalysed reaction is chorismate = isochorismate. The enzyme catalyses isochorismate = salicylate + pyruvate. It carries out the reaction chorismate = prephenate. Its pathway is siderophore biosynthesis; mycobactin biosynthesis. Functionally, involved in the incorporation of salicylate into the virulence-conferring salicylate-based siderophore mycobactin. Catalyzes the initial conversion of chorismate to yield the intermediate isochorismate (isochorismate synthase activity), and the subsequent elimination of the enolpyruvyl side chain in a lyase reaction to give salicylate (isochorismate pyruvate-lyase activity). In the absence of magnesium, MbtI displays a chorismate mutase activity and converts chorismate to prephenate. The chain is Salicylate synthase (mbtI) from Mycolicibacterium paratuberculosis (strain ATCC BAA-968 / K-10) (Mycobacterium paratuberculosis).